Consider the following 152-residue polypeptide: Endoribonuclease YbeY (152 aa).

Zn(2+) is bound by residues His117, His121, and His127.

Belongs to the endoribonuclease YbeY family. Zn(2+) is required as a cofactor.

It is found in the cytoplasm. Its function is as follows. Single strand-specific metallo-endoribonuclease involved in late-stage 70S ribosome quality control and in maturation of the 3' terminus of the 16S rRNA. This Sulfurihydrogenibium sp. (strain YO3AOP1) protein is Endoribonuclease YbeY.